The primary structure comprises 601 residues: Deuterosome assembly protein 1 (601 aa).

Coiled-coil stretches lie at residues 14 to 59 (CEAE…NAQT), 86 to 197 (TQNY…KQQR), and 226 to 278 (IEKL…LQSR). Disordered stretches follow at residues 115–135 (MKQN…PFEL) and 188–213 (QTQL…CESS). The span at 121 to 131 (HRKEASNKDET) shows a compositional bias: basic and acidic residues. The tract at residues 307–326 (DNRKRVESSYSPSTKEPERK) is disordered. The stretch at 340–397 (HEKELNKMRSQLYQEEDLCSEQERMRNEISELTQELHQKEVTIATIMKKAALLERQLK) forms a coiled coil. Phosphoserine is present on S544. Positions 555–586 (AAQHFLMEEEKRAKELEKLLNTHIDELQRHTE) form a coiled coil.

This sequence belongs to the CEP63 family. As to quaternary structure, interacts with CEP152; the interaction is mutually exclusive with CEP63.

Its subcellular location is the cytoplasm. In terms of biological role, key structural component of the deuterosome, a structure that promotes de novo centriole amplification in multiciliated cells. Deuterosome-mediated centriole amplification occurs in terminally differentiated multiciliated cells and can generate more than 100 centrioles. Probably sufficient for the specification and formation of the deuterosome inner core. Interacts with CEP152 and recruits PLK4 to activate centriole biogenesis. The protein is Deuterosome assembly protein 1 of Rattus norvegicus (Rat).